Here is a 262-residue protein sequence, read N- to C-terminus: Hydroxyethylthiazole kinase (262 aa).

Met-50 provides a ligand contact to substrate. ATP is bound by residues Arg-125 and Thr-171. Residue Gly-198 participates in substrate binding.

It belongs to the Thz kinase family. It depends on Mg(2+) as a cofactor.

The catalysed reaction is 5-(2-hydroxyethyl)-4-methylthiazole + ATP = 4-methyl-5-(2-phosphooxyethyl)-thiazole + ADP + H(+). It participates in cofactor biosynthesis; thiamine diphosphate biosynthesis; 4-methyl-5-(2-phosphoethyl)-thiazole from 5-(2-hydroxyethyl)-4-methylthiazole: step 1/1. In terms of biological role, catalyzes the phosphorylation of the hydroxyl group of 4-methyl-5-beta-hydroxyethylthiazole (THZ). This Escherichia coli (strain SMS-3-5 / SECEC) protein is Hydroxyethylthiazole kinase.